Here is a 114-residue protein sequence, read N- to C-terminus: Large ribosomal subunit protein uL22 (114 aa).

This sequence belongs to the universal ribosomal protein uL22 family. As to quaternary structure, part of the 50S ribosomal subunit.

Functionally, this protein binds specifically to 23S rRNA; its binding is stimulated by other ribosomal proteins, e.g. L4, L17, and L20. It is important during the early stages of 50S assembly. It makes multiple contacts with different domains of the 23S rRNA in the assembled 50S subunit and ribosome. Its function is as follows. The globular domain of the protein is located near the polypeptide exit tunnel on the outside of the subunit, while an extended beta-hairpin is found that lines the wall of the exit tunnel in the center of the 70S ribosome. This Streptococcus sanguinis (strain SK36) protein is Large ribosomal subunit protein uL22.